Reading from the N-terminus, the 94-residue chain is Acylphosphatase (94 aa).

In terms of domain architecture, Acylphosphatase-like spans 5–94 (RLTAFVHGHV…PRDVEGFVER (90 aa)). Residues R20 and N38 contribute to the active site.

The protein belongs to the acylphosphatase family.

It carries out the reaction an acyl phosphate + H2O = a carboxylate + phosphate + H(+). In Corynebacterium glutamicum (strain R), this protein is Acylphosphatase (acyP).